A 95-amino-acid polypeptide reads, in one-letter code: Aspartyl/glutamyl-tRNA(Asn/Gln) amidotransferase subunit C (95 aa).

Belongs to the GatC family. As to quaternary structure, heterotrimer of A, B and C subunits.

The enzyme catalyses L-glutamyl-tRNA(Gln) + L-glutamine + ATP + H2O = L-glutaminyl-tRNA(Gln) + L-glutamate + ADP + phosphate + H(+). The catalysed reaction is L-aspartyl-tRNA(Asn) + L-glutamine + ATP + H2O = L-asparaginyl-tRNA(Asn) + L-glutamate + ADP + phosphate + 2 H(+). Its function is as follows. Allows the formation of correctly charged Asn-tRNA(Asn) or Gln-tRNA(Gln) through the transamidation of misacylated Asp-tRNA(Asn) or Glu-tRNA(Gln) in organisms which lack either or both of asparaginyl-tRNA or glutaminyl-tRNA synthetases. The reaction takes place in the presence of glutamine and ATP through an activated phospho-Asp-tRNA(Asn) or phospho-Glu-tRNA(Gln). This is Aspartyl/glutamyl-tRNA(Asn/Gln) amidotransferase subunit C from Bartonella bacilliformis (strain ATCC 35685 / KC583 / Herrer 020/F12,63).